A 185-amino-acid polypeptide reads, in one-letter code: Ribosome maturation factor RimM (185 aa).

One can recognise a PRC barrel domain in the interval 92 to 168 (DDDTFYHADL…GRRVVVAEAF (77 aa)).

This sequence belongs to the RimM family. As to quaternary structure, binds ribosomal protein uS19.

The protein resides in the cytoplasm. In terms of biological role, an accessory protein needed during the final step in the assembly of 30S ribosomal subunit, possibly for assembly of the head region. Essential for efficient processing of 16S rRNA. May be needed both before and after RbfA during the maturation of 16S rRNA. It has affinity for free ribosomal 30S subunits but not for 70S ribosomes. In Xanthobacter autotrophicus (strain ATCC BAA-1158 / Py2), this protein is Ribosome maturation factor RimM.